A 108-amino-acid chain; its full sequence is Iron-sulfur cluster assembly protein CyaY (108 aa).

It belongs to the frataxin family.

In terms of biological role, involved in iron-sulfur (Fe-S) cluster assembly. May act as a regulator of Fe-S biogenesis. In Burkholderia orbicola (strain MC0-3), this protein is Iron-sulfur cluster assembly protein CyaY.